Reading from the N-terminus, the 88-residue chain is ATP synthase F(0) complex subunit f, mitochondrial (88 aa).

An N-acetylalanine modification is found at Ala-2. At Ser-3 the chain carries Phosphoserine. At Lys-16 the chain carries N6-acetyllysine. A helical transmembrane segment spans residues 62–79 (MVLAAYVVFSYCISYKEL).

It belongs to the ATPase F chain family. As to quaternary structure, component of the ATP synthase complex composed at least of ATP5F1A/subunit alpha, ATP5F1B/subunit beta, ATP5MC1/subunit c (homooctomer), MT-ATP6/subunit a, MT-ATP8/subunit 8, ATP5ME/subunit e, ATP5MF/subunit f, ATP5MG/subunit g, ATP5MK/subunit k, ATP5MJ/subunit j, ATP5F1C/subunit gamma, ATP5F1D/subunit delta, ATP5F1E/subunit epsilon, ATP5PF/subunit F6, ATP5PB/subunit b, ATP5PD/subunit d, ATP5PO/subunit OSCP. ATP synthase complex consists of a soluble F(1) head domain (subunits alpha(3) and beta(3)) - the catalytic core - and a membrane F(0) domain - the membrane proton channel (subunits c, a, 8, e, f, g, k and j). These two domains are linked by a central stalk (subunits gamma, delta, and epsilon) rotating inside the F1 region and a stationary peripheral stalk (subunits F6, b, d, and OSCP).

It localises to the mitochondrion. The protein localises to the mitochondrion inner membrane. Its function is as follows. Subunit f, of the mitochondrial membrane ATP synthase complex (F(1)F(0) ATP synthase or Complex V) that produces ATP from ADP in the presence of a proton gradient across the membrane which is generated by electron transport complexes of the respiratory chain. ATP synthase complex consist of a soluble F(1) head domain - the catalytic core - and a membrane F(1) domain - the membrane proton channel. These two domains are linked by a central stalk rotating inside the F(1) region and a stationary peripheral stalk. During catalysis, ATP synthesis in the catalytic domain of F(1) is coupled via a rotary mechanism of the central stalk subunits to proton translocation. In vivo, can only synthesize ATP although its ATP hydrolase activity can be activated artificially in vitro. Part of the complex F(0) domain. The chain is ATP synthase F(0) complex subunit f, mitochondrial from Mus musculus (Mouse).